We begin with the raw amino-acid sequence, 163 residues long: Putative MucR family transcriptional regulatory protein RA0938 (163 aa).

It belongs to the ros/MucR family.

The polypeptide is Putative MucR family transcriptional regulatory protein RA0938 (Rhizobium meliloti (strain 1021) (Ensifer meliloti)).